The chain runs to 473 residues: Ornithine decarboxylase (473 aa).

Position 106 is an N6-(pyridoxal phosphate)lysine (lysine 106). Pyridoxal 5'-phosphate contacts are provided by residues serine 240, glycine 277, and 313–316 (EPGR). A substrate-binding site is contributed by 367-368 (FD). The active-site Proton donor; shared with dimeric partner is cysteine 417. Residue aspartate 418 coordinates substrate. A pyridoxal 5'-phosphate-binding site is contributed by tyrosine 447.

Belongs to the Orn/Lys/Arg decarboxylase class-II family. Homodimer. Only the dimer is catalytically active, as the active sites are constructed of residues from both monomers. It depends on pyridoxal 5'-phosphate as a cofactor.

The protein resides in the cytoplasm. The enzyme catalyses L-ornithine + H(+) = putrescine + CO2. It functions in the pathway amine and polyamine biosynthesis; putrescine biosynthesis via L-ornithine pathway; putrescine from L-ornithine: step 1/1. Inhibited by antizyme (AZ) OAZ1 in response to polyamine levels. AZ inhibits the assembly of the functional homodimer by binding to ODC monomers and targeting them for ubiquitin-independent proteolytic destruction by the 26S proteasome. Catalyzes the first and rate-limiting step of polyamine biosynthesis that converts ornithine into putrescine, which is the precursor for the polyamines, spermidine and spermine. Polyamines are essential for cell proliferation and are implicated in cellular processes, ranging from DNA replication to apoptosis. This chain is Ornithine decarboxylase (SPE1), found in Candida albicans (strain SC5314 / ATCC MYA-2876) (Yeast).